The primary structure comprises 253 residues: Imidazole glycerol phosphate synthase subunit HisF (253 aa).

Catalysis depends on residues Asp11 and Asp130.

It belongs to the HisA/HisF family. Heterodimer of HisH and HisF.

The protein resides in the cytoplasm. The enzyme catalyses 5-[(5-phospho-1-deoxy-D-ribulos-1-ylimino)methylamino]-1-(5-phospho-beta-D-ribosyl)imidazole-4-carboxamide + L-glutamine = D-erythro-1-(imidazol-4-yl)glycerol 3-phosphate + 5-amino-1-(5-phospho-beta-D-ribosyl)imidazole-4-carboxamide + L-glutamate + H(+). It functions in the pathway amino-acid biosynthesis; L-histidine biosynthesis; L-histidine from 5-phospho-alpha-D-ribose 1-diphosphate: step 5/9. In terms of biological role, IGPS catalyzes the conversion of PRFAR and glutamine to IGP, AICAR and glutamate. The HisF subunit catalyzes the cyclization activity that produces IGP and AICAR from PRFAR using the ammonia provided by the HisH subunit. This is Imidazole glycerol phosphate synthase subunit HisF from Clostridium botulinum (strain Kyoto / Type A2).